Reading from the N-terminus, the 317-residue chain is Bile salt hydrolase/transferase (317 aa).

The active-site Nucleophile; acyl-thioester intermediate is Cys2. Deoxycholate-binding residues include Cys2 and Arg18. Asn82 serves as a coordination point for taurine.

Belongs to the peptidase C59 family. Homotetramer. The tetramer consists of a dimer of dimers.

The catalysed reaction is glycocholate + H2O = cholate + glycine. It carries out the reaction glycodeoxycholate + H2O = deoxycholate + glycine. It catalyses the reaction chenodeoxycholate + glycine = glycochenodeoxycholate + H2O. The enzyme catalyses cholate + taurine = taurocholate + H2O. The catalysed reaction is taurodeoxycholate + H2O = deoxycholate + taurine. It carries out the reaction taurochenodeoxycholate + H2O = chenodeoxycholate + taurine. It catalyses the reaction an L-alpha-amino acid + cholate = an N-choloyl-L-alpha-amino acid + H2O. The enzyme catalyses an L-alpha-amino acid + taurocholate = an N-choloyl-L-alpha-amino acid + taurine. The catalysed reaction is cholate + L-alanine = L-alanocholate + H2O. It carries out the reaction taurocholate + L-alanine = L-alanocholate + taurine. It catalyses the reaction cholate + L-serine = L-serocholate + H2O. The enzyme catalyses taurocholate + L-serine = L-serocholate + taurine. The catalysed reaction is cholate + L-histidine = L-histidocholate + H2O. It carries out the reaction taurocholate + L-histidine = L-histidocholate + taurine. The protein operates within lipid metabolism; bile acid biosynthesis. In terms of biological role, possesses dual functions in bile acid metabolism. Acts as a bile salt hydrolase that catalyzes the deconjugation of glycine- and taurine-linked bile salts, which occurs naturally in the intestines of humans, releasing amino acid residues and deconjugated bile salts (bile acids). Can hydrolyze the amide bond in all six major human conjugated bile salts, namely glycocholate (GCA), glycodeoxycholate (GDCA), glycochenodeoxycholate (GCDCA), taurocholate (TCA), taurodeoxycholate (TDCA) and taurochenodeoxycholate (TCDCA). Shows a slight preference for glycine-conjugated bile acids as substrates. Also acts as an amine N-acyltransferase that conjugates a wide variety of amino acids to conjugated and non-conjugated bile acids, thus producing bacterial bile acid amidates (BBAAs) - also named microbially conjugated bile acids (MCBAs) - in the gastrointestinal tract. These BBAAs may facilitate communication between the microbiota and host through the activation of human ligand-activated transcription factors. This Bifidobacterium longum subsp. longum (strain ATCC 15707 / DSM 20219 / JCM 1217 / NCTC 11818 / E194b) protein is Bile salt hydrolase/transferase.